A 607-amino-acid chain; its full sequence is Elongation factor 4 (607 aa).

The region spanning 11–193 (KNIRNFSIIA…KIVETIPAPS (183 aa)) is the tr-type G domain. Residues 23-28 (DHGKST) and 140-143 (NKID) each bind GTP.

The protein belongs to the TRAFAC class translation factor GTPase superfamily. Classic translation factor GTPase family. LepA subfamily.

It is found in the cell membrane. The catalysed reaction is GTP + H2O = GDP + phosphate + H(+). Its function is as follows. Required for accurate and efficient protein synthesis under certain stress conditions. May act as a fidelity factor of the translation reaction, by catalyzing a one-codon backward translocation of tRNAs on improperly translocated ribosomes. Back-translocation proceeds from a post-translocation (POST) complex to a pre-translocation (PRE) complex, thus giving elongation factor G a second chance to translocate the tRNAs correctly. Binds to ribosomes in a GTP-dependent manner. This is Elongation factor 4 from Staphylococcus carnosus (strain TM300).